The sequence spans 697 residues: Elongation factor G 2 (697 aa).

The tr-type G domain maps to 5 to 280 (SKYRNIGIFA…AVVDYLPAPD (276 aa)). GTP is bound by residues 14-21 (AHVDAGKT), 78-82 (DTPGH), and 132-135 (NKLD).

Belongs to the TRAFAC class translation factor GTPase superfamily. Classic translation factor GTPase family. EF-G/EF-2 subfamily.

Its subcellular location is the cytoplasm. In terms of biological role, catalyzes the GTP-dependent ribosomal translocation step during translation elongation. During this step, the ribosome changes from the pre-translocational (PRE) to the post-translocational (POST) state as the newly formed A-site-bound peptidyl-tRNA and P-site-bound deacylated tRNA move to the P and E sites, respectively. Catalyzes the coordinated movement of the two tRNA molecules, the mRNA and conformational changes in the ribosome. This is Elongation factor G 2 from Shewanella sp. (strain MR-7).